The chain runs to 123 residues: Large ribosomal subunit protein uL14 (123 aa).

Belongs to the universal ribosomal protein uL14 family. As to quaternary structure, part of the 50S ribosomal subunit. Forms a cluster with proteins L3 and L19. In the 70S ribosome, L14 and L19 interact and together make contacts with the 16S rRNA in bridges B5 and B8.

Its function is as follows. Binds to 23S rRNA. Forms part of two intersubunit bridges in the 70S ribosome. The polypeptide is Large ribosomal subunit protein uL14 (Actinobacillus pleuropneumoniae serotype 7 (strain AP76)).